We begin with the raw amino-acid sequence, 550 residues long: Arginine--tRNA ligase (550 aa).

Positions 130–140 (ANPTGPIHLGG) match the 'HIGH' region motif.

The protein belongs to the class-I aminoacyl-tRNA synthetase family. In terms of assembly, monomer.

The protein resides in the cytoplasm. It catalyses the reaction tRNA(Arg) + L-arginine + ATP = L-arginyl-tRNA(Arg) + AMP + diphosphate. In Corynebacterium glutamicum (strain ATCC 13032 / DSM 20300 / JCM 1318 / BCRC 11384 / CCUG 27702 / LMG 3730 / NBRC 12168 / NCIMB 10025 / NRRL B-2784 / 534), this protein is Arginine--tRNA ligase (argS).